The primary structure comprises 701 residues: Kinesin-like protein KIN-10C (701 aa).

In terms of domain architecture, Kinesin motor spans 8 to 318 (VVRVVARVKP…LNLASRICLG (311 aa)). Position 94–101 (94–101 (GARNSGKT)) interacts with ATP.

The protein belongs to the TRAFAC class myosin-kinesin ATPase superfamily. Kinesin family. KIN-10 subfamily.

This chain is Kinesin-like protein KIN-10C, found in Arabidopsis thaliana (Mouse-ear cress).